The primary structure comprises 181 residues: Inner membrane-spanning protein YciB (181 aa).

5 helical membrane passes run 10-30 (LIIFFAVYKFFDIYVASGALI), 50-70 (MHLITFVMVTVFGSLTLILHD), 72-92 (SFIKWKVTIVYALFAIALGVS), 118-138 (VTWYWVSFFVVCGLVNIYVAF), and 148-168 (FKVFGLTALTLINTVLTVLYL).

This sequence belongs to the YciB family.

It is found in the cell inner membrane. Its function is as follows. Plays a role in cell envelope biogenesis, maintenance of cell envelope integrity and membrane homeostasis. The sequence is that of Inner membrane-spanning protein YciB from Shewanella halifaxensis (strain HAW-EB4).